The chain runs to 470 residues: SHUGOSHIN 2 (470 aa).

Residues 72–113 (IQKLRINLRSVQEKNLQLAQANSQMLAELNTNRDRLKDLQHE) adopt a coiled-coil conformation. Composition is skewed to basic and acidic residues over residues 131–143 (VLPR…KDKV) and 150–162 (GDCK…DIKH). 2 disordered regions span residues 131-176 (VLPR…IKSS) and 358-470 (ESAG…RRKC). Residues 163-172 (KDTKRKRTTR) are compositionally biased toward basic residues. Over residues 370–381 (SESRHETKEITR) the composition is skewed to basic and acidic residues. Residues 382 to 392 (KRSFSTRRQST) are compositionally biased toward basic residues. 3 stretches are compositionally biased toward basic and acidic residues: residues 396–406 (SQTDEAIKEIA), 423–438 (TESK…EGMT), and 449–462 (HAAE…EVSL).

It belongs to the shugoshin family.

Functionally, dispensable for both meiotic and mitotic cell cycle progression. Required with SGO1 for full protection of centromeric cohesion during anaphase I. Required to prevent precocious release of pericentromeric cohesins during meiosis. Acts redundantly to SGO1. This chain is SHUGOSHIN 2, found in Arabidopsis thaliana (Mouse-ear cress).